The primary structure comprises 147 residues: Large ribosomal subunit protein uL15 (147 aa).

The segment at 1–42 (MTIKLHHLRPAPGSKSNKIRVGRGEGGKRGKTAGRGTKGTKA) is disordered.

This sequence belongs to the universal ribosomal protein uL15 family. Part of the 50S ribosomal subunit.

Binds to the 23S rRNA. This chain is Large ribosomal subunit protein uL15, found in Rhodococcus erythropolis (strain PR4 / NBRC 100887).